The chain runs to 140 residues: Large ribosomal subunit protein uL16 (140 aa).

A compositionally biased stretch (basic residues) spans 1–16; that stretch reads MLMPKRVKHRKQMKGR. Residues 1-20 form a disordered region; sequence MLMPKRVKHRKQMKGRMKGD.

It belongs to the universal ribosomal protein uL16 family. As to quaternary structure, part of the 50S ribosomal subunit.

Functionally, binds 23S rRNA and is also seen to make contacts with the A and possibly P site tRNAs. This is Large ribosomal subunit protein uL16 from Geobacter sulfurreducens (strain ATCC 51573 / DSM 12127 / PCA).